A 261-amino-acid polypeptide reads, in one-letter code: tRNA pseudouridine synthase A (261 aa).

D51 acts as the Nucleophile in catalysis. Y109 serves as a coordination point for substrate.

Belongs to the tRNA pseudouridine synthase TruA family. Homodimer.

The enzyme catalyses uridine(38/39/40) in tRNA = pseudouridine(38/39/40) in tRNA. Formation of pseudouridine at positions 38, 39 and 40 in the anticodon stem and loop of transfer RNAs. The sequence is that of tRNA pseudouridine synthase A from Shewanella sp. (strain MR-4).